The following is a 110-amino-acid chain: UPF0122 protein BcerKBAB4_3669 (110 aa).

It belongs to the UPF0122 family.

Functionally, might take part in the signal recognition particle (SRP) pathway. This is inferred from the conservation of its genetic proximity to ftsY/ffh. May be a regulatory protein. This chain is UPF0122 protein BcerKBAB4_3669, found in Bacillus mycoides (strain KBAB4) (Bacillus weihenstephanensis).